A 403-amino-acid polypeptide reads, in one-letter code: Cystinosin homolog (403 aa).

The Lumenal segment spans residues 1–122 (MKLPVSILFF…YSRITVIRSH (122 aa)). 4 N-linked (GlcNAc...) asparagine glycosylation sites follow: N45, N52, N78, and N96. A helical transmembrane segment spans residues 123–143 (WLAILIQIVGWTYFAAWSVSF). Residues 124–190 (LAILIQIVGW…MYYNSHVKNI (67 aa)) form the PQ-loop 1 domain. The Cytoplasmic segment spans residues 144–162 (YPQMYLNFKRKSVVGLNFD). Residues 163 to 183 (FLSLNLVGFGAYAMFNLLMYY) traverse the membrane as a helical segment. Residues 184-206 (NSHVKNIYSMENPRSPPPVLLND) are Lumenal-facing. Residues 207–227 (VVFAVHAFLACFVTILQCIFY) traverse the membrane as a helical segment. The Cytoplasmic segment spans residues 228–237 (ERDQQRISTK). Residues 238 to 258 (CIILIIGLVSFGFVSVVVTVL) form a helical membrane-spanning segment. At 259-260 (NK) the chain is on the lumenal side. A helical transmembrane segment spans residues 261 to 283 (ITILDFVVSLSYIKMAVTCCKYF). The 61-residue stretch at 266-326 (FVVSLSYIKM…MVLQAINVND (61 aa)) folds into the PQ-loop 2 domain. Topologically, residues 284–294 (PQAYFNYQRKS) are cytoplasmic. A helical transmembrane segment spans residues 295-315 (TVGWSIGNILLDFTGGSLDIL). At 316–336 (QMVLQAINVNDWSAFYANPVK) the chain is on the lumenal side. The helical transmembrane segment at 337–357 (FGLGFVSIFFDIIFMIQHYAL) threads the bilayer. Over 358–403 (YPDAEVPHNEYHGVDNPDPDSIVRDAEHGAADNESMESTDPIIVHD) the chain is Cytoplasmic. The segment covering 374-388 (PDPDSIVRDAEHGAA) has biased composition (basic and acidic residues). Residues 374–403 (PDPDSIVRDAEHGAADNESMESTDPIIVHD) form a disordered region.

Belongs to the cystinosin family.

It localises to the lysosome membrane. The protein localises to the cytoplasmic vesicle. The protein resides in the phagosome. The catalysed reaction is L-cystine(out) + H(+)(out) = L-cystine(in) + H(+)(in). Its function is as follows. Cystine/H(+) symporter that mediates export of cystine, the oxidized dimer of cysteine, from lysosomes. May play a role in the degradation of engulfed apoptotic cells. The sequence is that of Cystinosin homolog (ctns-1) from Caenorhabditis briggsae.